A 223-amino-acid polypeptide reads, in one-letter code: 7-cyano-7-deazaguanine synthase (223 aa).

Residue 11–21 participates in ATP binding; sequence ISGGMDSALAA. Residues Cys189, Cys197, Cys200, and Cys203 each coordinate Zn(2+).

This sequence belongs to the QueC family. The cofactor is Zn(2+).

The catalysed reaction is 7-carboxy-7-deazaguanine + NH4(+) + ATP = 7-cyano-7-deazaguanine + ADP + phosphate + H2O + H(+). Its pathway is purine metabolism; 7-cyano-7-deazaguanine biosynthesis. Catalyzes the ATP-dependent conversion of 7-carboxy-7-deazaguanine (CDG) to 7-cyano-7-deazaguanine (preQ(0)). The protein is 7-cyano-7-deazaguanine synthase of Campylobacter fetus subsp. fetus (strain 82-40).